Here is a 271-residue protein sequence, read N- to C-terminus: GATA transcription factor 19 (271 aa).

A disordered region spans residues 1-23 (MAAEPPADGRDPPADDGAAGDGA). Positions 33–68 (LSAASEQLTLVYQGEVYVFDPVPPQKVQAVLLVLGG) constitute a Tify domain. Positions 95 to 137 (RVASLMRFREKRKERCFDKKIRYSVRKEVAQKMKRRKGQFAGR) constitute a CCT domain. The GATA-type zinc-finger motif lies at 166–193 (CQNCGISSRLTPAMRRGPAGPRSLCNAC). A disordered region spans residues 238 to 271 (NQTTMKTDTEMVPEQEQKADVLPPTKEEDSMATS). Residues 252 to 271 (QEQKADVLPPTKEEDSMATS) show a composition bias toward basic and acidic residues.

The protein belongs to the type IV zinc-finger family. Class C subfamily.

Its subcellular location is the nucleus. Its function is as follows. Transcriptional activator that specifically binds 5'-GATA-3' or 5'-GAT-3' motifs within gene promoters. The protein is GATA transcription factor 19 of Oryza sativa subsp. japonica (Rice).